Reading from the N-terminus, the 561-residue chain is MPESKYRQQTIRAPRGTVLTAKSWLTEAPLRMLMNNLDPDVAENPHELVVYGGIGRAARNWECYDAIVDALTRLEADETLLIQSGKPVGVFKTHDNAPRVLIANSNLVPHWATWEHFNELDAKGLAMYGQMTAGSWIYIGSQGIVQGTYETFVEAGRQHYNGTLAGRWVLTAGLGGMGGAQPLAATLAGACSLTIECQQSRIDFRLRTRYVDEQAATLDDALARITRYTREGKAVSVALCANAADILPELVNRGVRPDLVTDQTSAHDPLHGYLPSGWRWEEYQKNAQSDPHGTMQAAKRSMAAHVRAMLAFSKMGVPTFDYGNNIRQMAKEMGVENAFDFPGFVPAYIRPLFCRGIGPFRWVALSGDPQDIYKTDAKVKEIVAEDKHLHHWLDMARERIHFQGLPARICWVGLEWRQKLGLAFNEMVRCGEVSAPIVIGRDHLDSGSVASPNRETEAMRDGSDAVSDWPLLNALLNTASGATWVSLHHGGGVGMGFSQHAGMVIVCDGTDEAAARIRRVLHNDPATGVMRHADAGYDLAVECAVEQGLNLPMVAATQGKG.

NAD(+)-binding positions include G52–G53, Q130, G176–G178, E196, R201, N242–A243, Q263–H267, Y273–L274, and Y322. The active site involves C410. G492 contacts NAD(+).

This sequence belongs to the urocanase family. NAD(+) serves as cofactor.

The protein resides in the cytoplasm. The catalysed reaction is 4-imidazolone-5-propanoate = trans-urocanate + H2O. Its pathway is amino-acid degradation; L-histidine degradation into L-glutamate; N-formimidoyl-L-glutamate from L-histidine: step 2/3. Its function is as follows. Catalyzes the conversion of urocanate to 4-imidazolone-5-propionate. The protein is Urocanate hydratase of Salmonella choleraesuis (strain SC-B67).